We begin with the raw amino-acid sequence, 68 residues long: DNA-directed RNA polymerase subunit omega (68 aa).

Belongs to the RNA polymerase subunit omega family. In terms of assembly, the RNAP catalytic core consists of 2 alpha, 1 beta, 1 beta' and 1 omega subunit. When a sigma factor is associated with the core the holoenzyme is formed, which can initiate transcription.

It carries out the reaction RNA(n) + a ribonucleoside 5'-triphosphate = RNA(n+1) + diphosphate. Promotes RNA polymerase assembly. Latches the N- and C-terminal regions of the beta' subunit thereby facilitating its interaction with the beta and alpha subunits. The protein is DNA-directed RNA polymerase subunit omega of Sulfurovum sp. (strain NBC37-1).